The chain runs to 350 residues: UDP-N-acetylenolpyruvoylglucosamine reductase (350 aa).

The FAD-binding PCMH-type domain occupies 24–195; it reads HVEATARWLL…VAVEFNLPLL (172 aa). Arg-172 is an active-site residue. The active-site Proton donor is the Ser-245. Residue Glu-342 is part of the active site.

This sequence belongs to the MurB family. It depends on FAD as a cofactor.

The protein localises to the cytoplasm. The enzyme catalyses UDP-N-acetyl-alpha-D-muramate + NADP(+) = UDP-N-acetyl-3-O-(1-carboxyvinyl)-alpha-D-glucosamine + NADPH + H(+). The protein operates within cell wall biogenesis; peptidoglycan biosynthesis. Functionally, cell wall formation. The chain is UDP-N-acetylenolpyruvoylglucosamine reductase from Xanthomonas axonopodis pv. citri (strain 306).